Reading from the N-terminus, the 955-residue chain is Bifunctional glutamine synthetase adenylyltransferase/adenylyl-removing enzyme (955 aa).

An adenylyl removase region spans residues Met1 to Gln458. Residues Cys464–Pro955 are adenylyl transferase.

Belongs to the GlnE family. Mg(2+) is required as a cofactor.

It carries out the reaction [glutamine synthetase]-O(4)-(5'-adenylyl)-L-tyrosine + phosphate = [glutamine synthetase]-L-tyrosine + ADP. The enzyme catalyses [glutamine synthetase]-L-tyrosine + ATP = [glutamine synthetase]-O(4)-(5'-adenylyl)-L-tyrosine + diphosphate. Its function is as follows. Involved in the regulation of glutamine synthetase GlnA, a key enzyme in the process to assimilate ammonia. When cellular nitrogen levels are high, the C-terminal adenylyl transferase (AT) inactivates GlnA by covalent transfer of an adenylyl group from ATP to specific tyrosine residue of GlnA, thus reducing its activity. Conversely, when nitrogen levels are low, the N-terminal adenylyl removase (AR) activates GlnA by removing the adenylyl group by phosphorolysis, increasing its activity. The regulatory region of GlnE binds the signal transduction protein PII (GlnB) which indicates the nitrogen status of the cell. The polypeptide is Bifunctional glutamine synthetase adenylyltransferase/adenylyl-removing enzyme (Ralstonia nicotianae (strain ATCC BAA-1114 / GMI1000) (Ralstonia solanacearum)).